The primary structure comprises 270 residues: ATP synthase subunit a (270 aa).

The next 6 helical transmembrane spans lie at 27–47, 90–110, 147–166, 182–202, 211–231, and 238–258; these read FWTF…VFIL, IAPL…MDLI, VNMT…FYSV, PFNT…SLIA, LFGN…TLGV, and FLWA…FMML.

This sequence belongs to the ATPase A chain family. As to quaternary structure, F-type ATPases have 2 components, CF(1) - the catalytic core - and CF(0) - the membrane proton channel. CF(1) has five subunits: alpha(3), beta(3), gamma(1), delta(1), epsilon(1). CF(0) has three main subunits: a(1), b(2) and c(9-12). The alpha and beta chains form an alternating ring which encloses part of the gamma chain. CF(1) is attached to CF(0) by a central stalk formed by the gamma and epsilon chains, while a peripheral stalk is formed by the delta and b chains.

The protein localises to the cell inner membrane. Functionally, key component of the proton channel; it plays a direct role in the translocation of protons across the membrane. The protein is ATP synthase subunit a of Pseudoalteromonas atlantica (strain T6c / ATCC BAA-1087).